A 153-amino-acid chain; its full sequence is Ribosome-binding factor A (153 aa).

Residues 116–153 (DAQVAEQAQGAQYAAGEDAYRTPSDEDDAEGPESAPRV) are disordered. Residues 119 to 132 (VAEQAQGAQYAAGE) show a composition bias toward low complexity.

This sequence belongs to the RbfA family. Monomer. Binds 30S ribosomal subunits, but not 50S ribosomal subunits or 70S ribosomes.

It is found in the cytoplasm. Functionally, one of several proteins that assist in the late maturation steps of the functional core of the 30S ribosomal subunit. Associates with free 30S ribosomal subunits (but not with 30S subunits that are part of 70S ribosomes or polysomes). Required for efficient processing of 16S rRNA. May interact with the 5'-terminal helix region of 16S rRNA. The chain is Ribosome-binding factor A from Kocuria rhizophila (strain ATCC 9341 / DSM 348 / NBRC 103217 / DC2201).